The chain runs to 187 residues: MAGALRNAMVYLGLAEDDRYAEDTEPETTRPRVEAAREVRVESRHEARPEVRHEPRPEVSVERRPAPATTAQVTPIRKQVAHVVPQTSTTSSSPELHRITTIHPRTYNEAKTIGESFREGVPVIMNLTDMDDSDAKRLVDFSAGLVFGLHGAIERVTNKVFLLSPANVEVASQEEERPTERTFFNQS.

The interval 13–74 is disordered; sequence GLAEDDRYAE…PAPATTAQVT (62 aa). Over residues 16–65 the composition is skewed to basic and acidic residues; it reads EDDRYAEDTEPETTRPRVEAAREVRVESRHEARPEVRHEPRPEVSVERRP.

This sequence belongs to the SepF family. Homodimer. Interacts with FtsZ.

The protein localises to the cytoplasm. Its function is as follows. Cell division protein that is part of the divisome complex and is recruited early to the Z-ring. Probably stimulates Z-ring formation, perhaps through the cross-linking of FtsZ protofilaments. Its function overlaps with FtsA. This chain is Cell division protein SepF, found in Kineococcus radiotolerans (strain ATCC BAA-149 / DSM 14245 / SRS30216).